The primary structure comprises 341 residues: Methionine import ATP-binding protein MetN 3 (341 aa).

The region spanning 2–241 (ILLENVKKIY…PQQDITKRFV (240 aa)) is the ABC transporter domain. Residue 38 to 45 (GYSGAGKS) participates in ATP binding.

The protein belongs to the ABC transporter superfamily. Methionine importer (TC 3.A.1.24) family. In terms of assembly, the complex is composed of two ATP-binding proteins (MetN), two transmembrane proteins (MetI) and a solute-binding protein (MetQ).

Its subcellular location is the cell membrane. It catalyses the reaction L-methionine(out) + ATP + H2O = L-methionine(in) + ADP + phosphate + H(+). The catalysed reaction is D-methionine(out) + ATP + H2O = D-methionine(in) + ADP + phosphate + H(+). Functionally, part of the ABC transporter complex MetNIQ involved in methionine import. Responsible for energy coupling to the transport system. This chain is Methionine import ATP-binding protein MetN 3, found in Bacillus cereus (strain ZK / E33L).